The following is a 154-amino-acid chain: Transcriptional repressor NrdR (154 aa).

Residues 3 to 34 fold into a zinc finger; sequence CPYCRHPDSRVVDSREADDGQLIRRRRSCPEC. The ATP-cone domain occupies 46 to 136; that stretch reads LAVVKRSGVT…VYRSFESLAD (91 aa).

It belongs to the NrdR family. It depends on Zn(2+) as a cofactor.

Functionally, negatively regulates transcription of bacterial ribonucleotide reductase nrd genes and operons by binding to NrdR-boxes. The chain is Transcriptional repressor NrdR from Salinispora tropica (strain ATCC BAA-916 / DSM 44818 / JCM 13857 / NBRC 105044 / CNB-440).